Here is a 491-residue protein sequence, read N- to C-terminus: Ketol-acid reductoisomerase (NADP(+)) (491 aa).

The KARI N-terminal Rossmann domain maps to 15–208 (AQLGKCRFMG…GGHRAGVLES (194 aa)). Residues 45–48 (CGAQ), Arg-68, Arg-76, Ser-78, and 108–110 (DKQ) each bind NADP(+). Residue His-132 is part of the active site. Gly-158 lines the NADP(+) pocket. KARI C-terminal knotted domains are found at residues 209 to 344 (SFVA…TAPQ) and 345 to 484 (FEGK…MTDM). Asp-217, Glu-221, Glu-389, and Glu-393 together coordinate Mg(2+). Ser-414 contributes to the substrate binding site.

Belongs to the ketol-acid reductoisomerase family. Requires Mg(2+) as cofactor.

The catalysed reaction is (2R)-2,3-dihydroxy-3-methylbutanoate + NADP(+) = (2S)-2-acetolactate + NADPH + H(+). It catalyses the reaction (2R,3R)-2,3-dihydroxy-3-methylpentanoate + NADP(+) = (S)-2-ethyl-2-hydroxy-3-oxobutanoate + NADPH + H(+). It participates in amino-acid biosynthesis; L-isoleucine biosynthesis; L-isoleucine from 2-oxobutanoate: step 2/4. It functions in the pathway amino-acid biosynthesis; L-valine biosynthesis; L-valine from pyruvate: step 2/4. Its function is as follows. Involved in the biosynthesis of branched-chain amino acids (BCAA). Catalyzes an alkyl-migration followed by a ketol-acid reduction of (S)-2-acetolactate (S2AL) to yield (R)-2,3-dihydroxy-isovalerate. In the isomerase reaction, S2AL is rearranged via a Mg-dependent methyl migration to produce 3-hydroxy-3-methyl-2-ketobutyrate (HMKB). In the reductase reaction, this 2-ketoacid undergoes a metal-dependent reduction by NADPH to yield (R)-2,3-dihydroxy-isovalerate. The sequence is that of Ketol-acid reductoisomerase (NADP(+)) from Salmonella choleraesuis (strain SC-B67).